The chain runs to 295 residues: Light-independent protochlorophyllide reductase iron-sulfur ATP-binding protein (295 aa).

ATP-binding positions include 39 to 44 and lysine 68; that span reads GIGKST. Serine 43 is a Mg(2+) binding site. Residues cysteine 124 and cysteine 158 each coordinate [4Fe-4S] cluster. ATP contacts are provided by residues 209-210 and 233-235; these read NR and PDL.

Belongs to the NifH/BchL/ChlL family. As to quaternary structure, homodimer. Protochlorophyllide reductase is composed of three subunits; BchL, BchN and BchB. Requires [4Fe-4S] cluster as cofactor.

It catalyses the reaction chlorophyllide a + oxidized 2[4Fe-4S]-[ferredoxin] + 2 ADP + 2 phosphate = protochlorophyllide a + reduced 2[4Fe-4S]-[ferredoxin] + 2 ATP + 2 H2O. It functions in the pathway porphyrin-containing compound metabolism; bacteriochlorophyll biosynthesis (light-independent). In terms of biological role, component of the dark-operative protochlorophyllide reductase (DPOR) that uses Mg-ATP and reduced ferredoxin to reduce ring D of protochlorophyllide (Pchlide) to form chlorophyllide a (Chlide). This reaction is light-independent. The L component serves as a unique electron donor to the NB-component of the complex, and binds Mg-ATP. This chain is Light-independent protochlorophyllide reductase iron-sulfur ATP-binding protein, found in Rhodospirillum rubrum (strain ATCC 11170 / ATH 1.1.1 / DSM 467 / LMG 4362 / NCIMB 8255 / S1).